Consider the following 124-residue polypeptide: UPF0231 protein Sama_0645 (124 aa).

This sequence belongs to the UPF0231 family.

This chain is UPF0231 protein Sama_0645, found in Shewanella amazonensis (strain ATCC BAA-1098 / SB2B).